Reading from the N-terminus, the 122-residue chain is Large ribosomal subunit protein uL14 (122 aa).

This sequence belongs to the universal ribosomal protein uL14 family. Part of the 50S ribosomal subunit. Forms a cluster with proteins L3 and L19. In the 70S ribosome, L14 and L19 interact and together make contacts with the 16S rRNA in bridges B5 and B8.

In terms of biological role, binds to 23S rRNA. Forms part of two intersubunit bridges in the 70S ribosome. The protein is Large ribosomal subunit protein uL14 of Bacillus anthracis (strain A0248).